The chain runs to 423 residues: Maltoporin 1 (423 aa).

The first 23 residues, 1-23 (MNTTLRALSVALAAALIAPSAFA), serve as a signal peptide directing secretion.

This sequence belongs to the porin LamB (TC 1.B.3) family. Homotrimer formed of three 18-stranded antiparallel beta-barrels, containing three independent channels.

It localises to the cell outer membrane. It carries out the reaction beta-maltose(in) = beta-maltose(out). Functionally, involved in the transport of maltose and maltodextrins. In Klebsiella pneumoniae subsp. pneumoniae (strain ATCC 700721 / MGH 78578), this protein is Maltoporin 1.